Here is a 280-residue protein sequence, read N- to C-terminus: Myelin proteolipid protein A (280 aa).

Over 1–10 (MGWHDGCIRC) the chain is Cytoplasmic. S-palmitoyl cysteine attachment occurs at residues Cys-7 and Cys-10. Residues 11 to 36 (MVGVPFASVIATVLCFAGVALFCGCG) traverse the membrane as a helical segment. Residues 37 to 59 (HEALSGTEKLIETYFSKNYQEYE) are Extracellular-facing. Residues 60–88 (YLIHVINAFQYVIYGIAIFFFLFGILLLA) traverse the membrane as a helical segment. Residues 89 to 152 (EGFYTTTAIK…LGKWLGHPDK (64 aa)) lie on the Cytoplasmic side of the membrane. 2 S-palmitoyl cysteine lipidation sites follow: Cys-140 and Cys-142. The helical transmembrane segment at 153 to 179 (FVGVTYIITILWILIFACSAVPVYIYF) threads the bilayer. Residues 180–239 (NTWVTCQSIAFPGKTTTSVSTLCSDARMYGVLPWNAFPGKVCGTSLLAICKTSEFQMTFH) lie on the Extracellular side of the membrane. 2 disulfide bridges follow: Cys-185–Cys-229 and Cys-202–Cys-221. Residues 240 to 269 (LFIAAFVGAAATLVALLTYMVGASFNYAVL) form a helical membrane-spanning segment. Residues 270–280 (RVTGRSDRSKF) lie on the Cytoplasmic side of the membrane.

Belongs to the myelin proteolipid protein family.

The protein resides in the cell membrane. In terms of biological role, this is the major myelin protein from the central nervous system. It plays an important role in the formation or maintenance of the multilamellar structure of myelin. In Xenopus laevis (African clawed frog), this protein is Myelin proteolipid protein A (plp1-a).